Reading from the N-terminus, the 146-residue chain is Large ribosomal subunit protein uL15 (146 aa).

Residues 1–13 (MKLHELKPAEGSR) show a composition bias toward basic and acidic residues. The tract at residues 1–65 (MKLHELKPAE…PLYRRLPKRG (65 aa)) is disordered. Gly residues-rich tracts occupy residues 21–31 (RGIGSGNGKTA) and 42–52 (SGGGVRPGFEG).

Belongs to the universal ribosomal protein uL15 family. Part of the 50S ribosomal subunit.

Functionally, binds to the 23S rRNA. The protein is Large ribosomal subunit protein uL15 of Halalkalibacterium halodurans (strain ATCC BAA-125 / DSM 18197 / FERM 7344 / JCM 9153 / C-125) (Bacillus halodurans).